Here is a 201-residue protein sequence, read N- to C-terminus: Glycerol-3-phosphate acyltransferase (201 aa).

6 helical membrane-spanning segments follow: residues 10-30 (MLIG…GLIL), 60-80 (LAAA…LIAA), 86-106 (AAIA…WIGF), 116-136 (LGVL…AWIV), 139-159 (LLTR…PIAL), and 166-186 (ALAA…RANI).

It belongs to the PlsY family. As to quaternary structure, probably interacts with PlsX.

The protein localises to the cell inner membrane. The enzyme catalyses an acyl phosphate + sn-glycerol 3-phosphate = a 1-acyl-sn-glycero-3-phosphate + phosphate. Its pathway is lipid metabolism; phospholipid metabolism. In terms of biological role, catalyzes the transfer of an acyl group from acyl-phosphate (acyl-PO(4)) to glycerol-3-phosphate (G3P) to form lysophosphatidic acid (LPA). This enzyme utilizes acyl-phosphate as fatty acyl donor, but not acyl-CoA or acyl-ACP. The polypeptide is Glycerol-3-phosphate acyltransferase (Brucella suis (strain ATCC 23445 / NCTC 10510)).